Reading from the N-terminus, the 543-residue chain is Probable protein kinase UbiB (543 aa).

Positions D123–L501 constitute a Protein kinase domain. ATP contacts are provided by residues L129–V137 and K152. Catalysis depends on D287, which acts as the Proton acceptor. The helical transmembrane segment at M517–A537 threads the bilayer.

The protein belongs to the ABC1 family. UbiB subfamily.

The protein resides in the cell inner membrane. The protein operates within cofactor biosynthesis; ubiquinone biosynthesis [regulation]. Functionally, is probably a protein kinase regulator of UbiI activity which is involved in aerobic coenzyme Q (ubiquinone) biosynthesis. The sequence is that of Probable protein kinase UbiB from Edwardsiella ictaluri (strain 93-146).